An 860-amino-acid polypeptide reads, in one-letter code: Leucine--tRNA ligase (860 aa).

The short motif at 42 to 52 (PYPSGRLHMGH) is the 'HIGH' region element. Residues 619–623 (KMSKS) carry the 'KMSKS' region motif. Position 622 (lysine 622) interacts with ATP.

Belongs to the class-I aminoacyl-tRNA synthetase family.

It localises to the cytoplasm. It carries out the reaction tRNA(Leu) + L-leucine + ATP = L-leucyl-tRNA(Leu) + AMP + diphosphate. The protein is Leucine--tRNA ligase of Salmonella enteritidis PT4 (strain P125109).